The sequence spans 233 residues: 5'-methylthioadenosine/S-adenosylhomocysteine nucleosidase (233 aa).

The Proton acceptor role is filled by Glu-12. Substrate is bound by residues Gly-78, Ile-152, and 173–174 (ME). Asp-197 acts as the Proton donor in catalysis.

The protein belongs to the PNP/UDP phosphorylase family. MtnN subfamily. Homodimer.

It catalyses the reaction S-adenosyl-L-homocysteine + H2O = S-(5-deoxy-D-ribos-5-yl)-L-homocysteine + adenine. The enzyme catalyses S-methyl-5'-thioadenosine + H2O = 5-(methylsulfanyl)-D-ribose + adenine. It carries out the reaction 5'-deoxyadenosine + H2O = 5-deoxy-D-ribose + adenine. It functions in the pathway amino-acid biosynthesis; L-methionine biosynthesis via salvage pathway; S-methyl-5-thio-alpha-D-ribose 1-phosphate from S-methyl-5'-thioadenosine (hydrolase route): step 1/2. Its function is as follows. Catalyzes the irreversible cleavage of the glycosidic bond in both 5'-methylthioadenosine (MTA) and S-adenosylhomocysteine (SAH/AdoHcy) to adenine and the corresponding thioribose, 5'-methylthioribose and S-ribosylhomocysteine, respectively. Also cleaves 5'-deoxyadenosine, a toxic by-product of radical S-adenosylmethionine (SAM) enzymes, into 5-deoxyribose and adenine. Thus, is required for in vivo function of the radical SAM enzymes biotin synthase and lipoic acid synthase, that are inhibited by 5'-deoxyadenosine accumulation. This Yersinia pestis bv. Antiqua (strain Angola) protein is 5'-methylthioadenosine/S-adenosylhomocysteine nucleosidase.